Reading from the N-terminus, the 235-residue chain is Orotidine 5'-phosphate decarboxylase (235 aa).

Substrate-binding positions include Asp-17, Lys-39, Asp-66–Thr-75, Thr-121, Arg-182, Gln-191, Gly-211, and Arg-212. Lys-68 functions as the Proton donor in the catalytic mechanism.

This sequence belongs to the OMP decarboxylase family. Type 1 subfamily. In terms of assembly, homodimer.

It catalyses the reaction orotidine 5'-phosphate + H(+) = UMP + CO2. Its pathway is pyrimidine metabolism; UMP biosynthesis via de novo pathway; UMP from orotate: step 2/2. In terms of biological role, catalyzes the decarboxylation of orotidine 5'-monophosphate (OMP) to uridine 5'-monophosphate (UMP). The chain is Orotidine 5'-phosphate decarboxylase from Afipia carboxidovorans (strain ATCC 49405 / DSM 1227 / KCTC 32145 / OM5) (Oligotropha carboxidovorans).